A 239-amino-acid chain; its full sequence is Succinate dehydrogenase [ubiquinone] iron-sulfur subunit (239 aa).

The 2Fe-2S ferredoxin-type domain maps to Ala-24–Leu-99. Cys-63, Cys-68, Cys-71, and Cys-83 together coordinate [2Fe-2S] cluster. Residues Asp-142–Tyr-172 enclose the 4Fe-4S ferredoxin-type domain. The [4Fe-4S] cluster site is built by Cys-152, Cys-155, and Cys-158. Cys-162 is a [3Fe-4S] cluster binding site. Trp-167 serves as a coordination point for a ubiquinone. 2 residues coordinate [3Fe-4S] cluster: Cys-209 and Cys-215. Residue Cys-219 participates in [4Fe-4S] cluster binding.

Belongs to the succinate dehydrogenase/fumarate reductase iron-sulfur protein family. In terms of assembly, component of complex II composed of four subunits: a flavoprotein (FP), an iron-sulfur protein (IP), and a cytochrome b composed of a large and a small subunit. The cofactor is [2Fe-2S] cluster. Requires [3Fe-4S] cluster as cofactor. It depends on [4Fe-4S] cluster as a cofactor.

Its subcellular location is the mitochondrion inner membrane. The catalysed reaction is a quinone + succinate = fumarate + a quinol. It participates in carbohydrate metabolism; tricarboxylic acid cycle; fumarate from succinate (eukaryal route): step 1/1. Functionally, iron-sulfur protein (IP) subunit of succinate dehydrogenase (SDH) that is involved in complex II of the mitochondrial electron transport chain and is responsible for transferring electrons from succinate to ubiquinone (coenzyme Q). The sequence is that of Succinate dehydrogenase [ubiquinone] iron-sulfur subunit (SDH2) from Porphyra purpurea (Red seaweed).